A 513-amino-acid polypeptide reads, in one-letter code: Bifunctional purine biosynthesis protein PurH (513 aa).

The MGS-like domain occupies 1–145; the sequence is MNKRAIISVY…KNFKYTTVIV (145 aa).

This sequence belongs to the PurH family.

The enzyme catalyses (6R)-10-formyltetrahydrofolate + 5-amino-1-(5-phospho-beta-D-ribosyl)imidazole-4-carboxamide = 5-formamido-1-(5-phospho-D-ribosyl)imidazole-4-carboxamide + (6S)-5,6,7,8-tetrahydrofolate. It catalyses the reaction IMP + H2O = 5-formamido-1-(5-phospho-D-ribosyl)imidazole-4-carboxamide. It functions in the pathway purine metabolism; IMP biosynthesis via de novo pathway; 5-formamido-1-(5-phospho-D-ribosyl)imidazole-4-carboxamide from 5-amino-1-(5-phospho-D-ribosyl)imidazole-4-carboxamide (10-formyl THF route): step 1/1. Its pathway is purine metabolism; IMP biosynthesis via de novo pathway; IMP from 5-formamido-1-(5-phospho-D-ribosyl)imidazole-4-carboxamide: step 1/1. This Caldicellulosiruptor bescii (strain ATCC BAA-1888 / DSM 6725 / KCTC 15123 / Z-1320) (Anaerocellum thermophilum) protein is Bifunctional purine biosynthesis protein PurH.